Here is a 402-residue protein sequence, read N- to C-terminus: MKAAYLDCFSGISGDMLLGALVDAGLDFNLLQRDLAGLDLDEYELYEQKVLKQGIRGTQIHVHALEGHVHRHLSDIQAIIGRSALPPQVKEKSLEIFTRLGKAEAKIHGTDIEQIHFHEVGAVDAIVDIVGAVIGFWRLGIEKVFASPIHVGKGFVKAAHGLLPVPAPATLELLTGVPIYAQDVEGELATPTGAAIVTAYCREFGPFPKIRVERVGYGAGVKDLTIPNLLRLTVGELADEDKGQEGIREGEALTLEVNIDDMNPECYDYLFEKLFQAGAMDVYIQTIQMKKNRPAVLLTVQTPYHKLEEMRKILFQETTTIGLRVYPIKKYMLPYELFTVETNYGSAKVKVAFMEGRACTVSPEYEDCRRLARLTGEPLKQIYEEIKEKAKILLYSTKYPID.

The protein belongs to the LarC family.

It catalyses the reaction Ni(II)-pyridinium-3,5-bisthiocarboxylate mononucleotide = pyridinium-3,5-bisthiocarboxylate mononucleotide + Ni(2+). Its function is as follows. Involved in the biosynthesis of a nickel-pincer cofactor ((SCS)Ni(II) pincer complex). Binds Ni(2+), and functions in nickel delivery to pyridinium-3,5-bisthiocarboxylic acid mononucleotide (P2TMN), to form the mature cofactor. Is thus probably required for the activation of nickel-pincer cofactor-dependent enzymes. The protein is Pyridinium-3,5-bisthiocarboxylic acid mononucleotide nickel insertion protein of Desulfitobacterium hafniense (strain DSM 10664 / DCB-2).